The sequence spans 367 residues: MAFKLWLLDEETIYEHVFERYTQLEGQSGKLAQDLGIQDRRGGVLEITFEPSGLEGGRKKKRVRRRNKASSVEEDQNVAVDSYHVSVGQSISSLHSSRDNGNSTTGYVLWSTTPFFINWLLYSTSAAPFRLGSQVEVTCGSSCEGHMLELPRLIDLTGADRGKRGILELGAGISGILPVILGNFVDTYVSTDQKGILNKLKDNIMENLSQLTRKRCISRSLRLELPTVEPVGDADITAASLPSKSTLHLEVAALDWEKINLQDKKTHSLHPELSLIGETCSSVYVIAMDVIYNEYLIDPFLKTLKQLKHWLQTTYNLQFHVLVGIHLRSQEVTTLFLEKAIIEYDFTVYDIVDQVIQESRFNFYLIT.

A disordered region spans residues 55–74 (EGGRKKKRVRRRNKASSVEE). A compositionally biased stretch (basic residues) spans 58 to 68 (RKKKRVRRRNK). S-adenosyl-L-methionine is bound by residues Trp110, 170–172 (GAG), Asp192, Trp256, and Met288.

This sequence belongs to the class I-like SAM-binding methyltransferase superfamily. RKM5 family.

S-adenosyl-L-methionine-dependent protein-lysine N-methyltransferase that monomethylates 60S ribosomal protein L1 (RPL1A and RPL1B) at 'Lys-46'. The polypeptide is Ribosomal lysine N-methyltransferase 5 (RKM5) (Saccharomyces cerevisiae (strain Lalvin EC1118 / Prise de mousse) (Baker's yeast)).